Reading from the N-terminus, the 986-residue chain is Translation initiation factor IF-2 (986 aa).

Residues 47–388 are disordered; the sequence is SAPAQTPHKE…RSKGRKGKYE (342 aa). The segment covering 53-64 has biased composition (basic and acidic residues); that stretch reads PHKEVSQEEVRV. Positions 78-94 are enriched in low complexity; that stretch reads PEAASAEAASAPAAQEE. Residues 95 to 113 show a composition bias toward basic and acidic residues; sequence APQKAEPEKVEAEKAEAPK. Low complexity-rich tracts occupy residues 127–141 and 153–214; these read EAAP…PAEA and APVA…QAPA. Composition is skewed to basic and acidic residues over residues 215–225 and 268–278; these read KAEEQEPEKAT and GVERPGTERPA. Low complexity predominate over residues 286–300; that stretch reads PAGAPGRPGERPTTG. The span at 358-374 shows a compositional bias: basic and acidic residues; sequence GKKDSFKDILDKRERVF. A tr-type G domain is found at 486 to 653; it reads KRPPVVTIMG…MVLLQADVLE (168 aa). The interval 495–502 is G1; sequence GHVDHGKT. Residue 495-502 participates in GTP binding; the sequence is GHVDHGKT. Positions 520-524 are G2; the sequence is GITQH. The interval 541–544 is G3; sequence DTPG. GTP contacts are provided by residues 541-545 and 595-598; these read DTPGH and NKID. The tract at residues 595–598 is G4; that stretch reads NKID. The tract at residues 631 to 633 is G5; the sequence is SAK.

Belongs to the TRAFAC class translation factor GTPase superfamily. Classic translation factor GTPase family. IF-2 subfamily.

Its subcellular location is the cytoplasm. In terms of biological role, one of the essential components for the initiation of protein synthesis. Protects formylmethionyl-tRNA from spontaneous hydrolysis and promotes its binding to the 30S ribosomal subunits. Also involved in the hydrolysis of GTP during the formation of the 70S ribosomal complex. The sequence is that of Translation initiation factor IF-2 from Citrifermentans bemidjiense (strain ATCC BAA-1014 / DSM 16622 / JCM 12645 / Bem) (Geobacter bemidjiensis).